The chain runs to 258 residues: Malonyl-[acyl-carrier protein] O-methyltransferase (258 aa).

The protein belongs to the methyltransferase superfamily.

The enzyme catalyses malonyl-[ACP] + S-adenosyl-L-methionine = malonyl-[ACP] methyl ester + S-adenosyl-L-homocysteine. The protein operates within cofactor biosynthesis; biotin biosynthesis. In terms of biological role, converts the free carboxyl group of a malonyl-thioester to its methyl ester by transfer of a methyl group from S-adenosyl-L-methionine (SAM). It allows to synthesize pimeloyl-ACP via the fatty acid synthetic pathway. In Haemophilus ducreyi (strain 35000HP / ATCC 700724), this protein is Malonyl-[acyl-carrier protein] O-methyltransferase.